The sequence spans 226 residues: Apoptosis regulator OPG045 (226 aa).

Belongs to the orthopoxvirus OPG045 family. As to quaternary structure, homodimer. Interacts with host pro-apoptotic protein BCL2L11 (via BH3 domain). Interacts with host NLRP1. Interacts with host BAK.

It is found in the host mitochondrion outer membrane. The protein localises to the host cytoplasm. Its function is as follows. Plays a role in evading host innate immune response by inhibiting host inflammasome activation. Interacts with and inhibits NLR-mediated interleukin-1 beta/IL1B production in infected cells. At the host mitochondria outer membrane, interacts with the BH3 domain of host BAK and prevents BAK from binding active BAX. In turn, host apoptosis is inhibited. This Homo sapiens (Human) protein is Apoptosis regulator OPG045 (OPG045).